Reading from the N-terminus, the 347-residue chain is Phenylalanine--tRNA ligase alpha subunit (347 aa).

Glutamate 261 lines the Mg(2+) pocket.

It belongs to the class-II aminoacyl-tRNA synthetase family. Phe-tRNA synthetase alpha subunit type 1 subfamily. Tetramer of two alpha and two beta subunits. The cofactor is Mg(2+).

It localises to the cytoplasm. The catalysed reaction is tRNA(Phe) + L-phenylalanine + ATP = L-phenylalanyl-tRNA(Phe) + AMP + diphosphate + H(+). The protein is Phenylalanine--tRNA ligase alpha subunit of Streptococcus mutans serotype c (strain ATCC 700610 / UA159).